A 175-amino-acid chain; its full sequence is Regenerating islet-derived protein 3-alpha (175 aa).

The signal sequence occupies residues 1 to 26 (MLPPMALPSVSWMLLSCLMLLSQVQG). The propeptide occupies 27-37 (EEPQRELPSAR). 3 disulfide bridges follow: cysteine 40-cysteine 51, cysteine 68-cysteine 171, and cysteine 146-cysteine 163. Residues 47–172 (YGSHCYALFL…CNVRLPYVCK (126 aa)) enclose the C-type lectin domain. The Zn(2+) site is built by histidine 50 and histidine 107. A sufficient to activate EXTL3 region spans residues 103 to 118 (WIGLHDPTQGTEPNGE). Residues 114-116 (EPN) carry the EPN motif. The Zn(2+) site is built by glutamate 121 and histidine 145.

As to quaternary structure, forms a hexameric membrane-permeabilizing oligomeric pore on membrane phospholipids. The hexamer is formed by three dimers related by helical symmetry. Forms filaments, filamentation traps pore complexes and limits damage to host cells. Interacts with EXTL3. In terms of processing, proteolytic processing by trypsin removes an inhibitory N-terminal propeptide and is essential for peptidoglycan binding and antibacterial activity. In terms of tissue distribution, expressed by keratinocytes. Highly expressed in epidermal keratinocytes of psoriasis patients (at protein level). Constitutively expressed in intestine. Low expression is found in healthy pancreas. Overexpressed during the acute phase of pancreatitis and in some patients with chronic pancreatitis.

The protein resides in the secreted. With respect to regulation, lipopolysaccharide inhibits pore-forming activity, explaining why is bactericidal for Gram-positive but not Gram-negative bacteria. In terms of biological role, bactericidal C-type lectin which acts exclusively against Gram-positive bacteria and mediates bacterial killing by binding to surface-exposed carbohydrate moieties of peptidoglycan. Binds membrane phospholipids and kills bacteria by forming a hexameric membrane-permeabilizing oligomeric pore. Functionally, acts as a hormone in response to different stimuli like anti-inflammatory signals, such as IL17A, or gut microbiome. Secreted by different cell types to activate its receptor EXTL3 and induce cell specific signaling pathways. Induced by IL17A in keratinocytes, regulates keratinocyte proliferation and differentiation after skin injury via activation of EXTL3-PI3K-AKT signaling pathway. In parallel, inhibits skin inflammation through the inhibition of inflammatory cytokines such as IL6 and TNF. In pancreas, is able to permealize beta-cells membrane and stimulate their proliferation. Its function is as follows. Has bacteriostatic activity. The polypeptide is Regenerating islet-derived protein 3-alpha (Homo sapiens (Human)).